The primary structure comprises 481 residues: Polygalacturonase QRT3 (481 aa).

An N-terminal signal peptide occupies residues 1–27 (MELRKSQVAMPVFLAIMSLMVSQVVFA). PbH1 repeat units lie at residues 203–226 (SLRT…LVKS), 261–282 (GNDN…MVSG), and 356–377 (IRGV…QIVQ). Asn415 and Asn455 each carry an N-linked (GlcNAc...) asparagine glycan.

This sequence belongs to the glycosyl hydrolase 28 family. In terms of tissue distribution, expressed in the tapetum cells in the anthers and in the ovules of open flowers.

It is found in the secreted. The protein resides in the cell wall. It catalyses the reaction (1,4-alpha-D-galacturonosyl)n+m + H2O = (1,4-alpha-D-galacturonosyl)n + (1,4-alpha-D-galacturonosyl)m.. In terms of biological role, polygalacturonase required for degrading the pollen mother cell wall during microspore development. The polypeptide is Polygalacturonase QRT3 (QRT3) (Arabidopsis thaliana (Mouse-ear cress)).